A 503-amino-acid polypeptide reads, in one-letter code: MAIHVKNNIHWVGQRDWEVRDFHGTEYKTLQGSSYNSYLIREEKTVLIDTVDHKFSRDFVQNLMAEVDLNTIDYIVINHAEEDHAGALSELMARIPNTPIYCTHNAIDSITGHHHHPEWHFHTVKTGDTLDIGNGKQLIFIETPMLHWPDSMMTYMTEDAVLFSNDAFGQHYCDEHLFNDEVDQTELFEQCQRYFANILTPFSRLVTAKIHEVLGFNLPLSMVATSHGVVWRDDPAQIIHLYLKWADSYQEDRITLFYDTMSNNTRMMADAIAQGINDVDPGVAVKIYNVARHDKNEILTQVFRSKGVLVGSSTMNNVMMPKVAAMLEEITGLRFQNKKASAFGSYGWNGGAVDRIQTRLMDAGFETTLALKTKWRPDGSALEICREHGREIARQWALHPLDDTPARRVISPVKQTTVAPQSASAPAESACGCSEVAAPQSTAQPAAQSGNGCMQCSVCQWIYDPALGEPMQDVTPGTMWSDVPDSFLCPECGLGKDVFNPIR.

Residues 30–210 (LQGSSYNSYL…PFSRLVTAKI (181 aa)) are zinc metallo-hydrolase. Fe cation contacts are provided by H79, E81, D83, H147, D166, and H227. One can recognise a Flavodoxin-like domain in the interval 254-393 (ITLFYDTMSN…ICREHGREIA (140 aa)). Residues 260-264 (TMSNN) and 342-369 (AFGSYGWNGGAVDRIQTRLMDAGFETTL) each bind FMN. The Rubredoxin-like domain maps to 451–502 (NGCMQCSVCQWIYDPALGEPMQDVTPGTMWSDVPDSFLCPECGLGKDVFNPI). Fe cation contacts are provided by C456, C459, C489, and C492.

The protein in the N-terminal section; belongs to the zinc metallo-hydrolase group 3 family. In terms of assembly, homotetramer. The cofactor is Fe cation. Requires FMN as cofactor.

Its subcellular location is the cytoplasm. Its pathway is nitrogen metabolism; nitric oxide reduction. In terms of biological role, anaerobic nitric oxide reductase; uses NADH to detoxify nitric oxide (NO), protecting several 4Fe-4S NO-sensitive enzymes. Has at least 2 reductase partners, only one of which (NorW, flavorubredoxin reductase) has been identified. NO probably binds to the di-iron center; electrons enter from the NorW at rubredoxin and are transferred sequentially to the FMN center and the di-iron center. Also able to function as an aerobic oxygen reductase. The sequence is that of Anaerobic nitric oxide reductase flavorubredoxin from Pectobacterium carotovorum subsp. carotovorum (strain PC1).